The chain runs to 548 residues: MAAKDVKFGNDARVKMLRGVNVLADAVKVTLGPKGRNVVLDKSFGAPTITKDGVSVAREIELEDKFENMGAQMVKEVASKANDAAGDGTTTATVLAQAIITEGLKAVAAGMNPMDLKRGIDKAVIAAVEELKALSVPCSDSKAIAQVGTISANSDETVGKMIAEAMDKVGKEGVITVEEGTGLQDELDVVEGMQFDRGYLSPYFINKPETGAVELESPFILLADKKISNIREMLPVLEAVAKAGKPLVIVAEDVEGEALATLVVNTMRGIVKVAAVKAPGFGDRRKAMLQDIATLTGGTVISEEIGLELEKATLEDLGQAKRVVINKDTTTIIDGTGEEAAIQGRVAQIRQQVEEATSDYDREKLQERVAKLAGGVAVIKVGAATEVEMKEKKARVEDALAATRAAVEEGVVAGGGVALVRVAAKLASLTAQNEDQNVGIKVALRAMEAPLRQIVSNAGEEPSVVANTVKAGEGNYGYNAATEEYGNMIDFGILDPTKVTRSALQYAASVAGLMITTECMVTDLPKSDAPDLGAAGGMGGMGGMGGMM.

ATP contacts are provided by residues 30 to 33, Lys-51, 87 to 91, Gly-415, 479 to 481, and Asp-495; these read TLGP, DGTTT, and NAA.

It belongs to the chaperonin (HSP60) family. Forms a cylinder of 14 subunits composed of two heptameric rings stacked back-to-back. Interacts with the co-chaperonin GroES.

The protein resides in the cytoplasm. The enzyme catalyses ATP + H2O + a folded polypeptide = ADP + phosphate + an unfolded polypeptide.. Together with its co-chaperonin GroES, plays an essential role in assisting protein folding. The GroEL-GroES system forms a nano-cage that allows encapsulation of the non-native substrate proteins and provides a physical environment optimized to promote and accelerate protein folding. The chain is Chaperonin GroEL from Pectobacterium carotovorum subsp. carotovorum (strain PC1).